The primary structure comprises 326 residues: Meso-diaminopimelate D-dehydrogenase (326 aa).

Residues 11–14, 35–37, 69–72, 92–94, and 121–125 each bind NADP(+); these read YGNL, TRR, CGGS, SFD, and VGWDP. Substrate-binding positions include D94, D124, W148, 154-155, T173, R199, H249, and N276; that span reads QG.

The protein belongs to the diaminopimelate dehydrogenase family. As to quaternary structure, homodimer.

The enzyme catalyses meso-2,6-diaminopimelate + NADP(+) + H2O = (S)-2-amino-6-oxoheptanedioate + NH4(+) + NADPH + H(+). It functions in the pathway amino-acid biosynthesis; L-lysine biosynthesis via DAP pathway; DL-2,6-diaminopimelate from (S)-tetrahydrodipicolinate: step 1/1. With respect to regulation, l,L-2,6-diaminopimelate, D,D-2,6-diaminopimelate and meso-2,5-diaminoadipate competitively inhibit the oxidation of meso-2,6-diaminopimelate. L-2-amino-6-methylene-pimelate is also a potent competitive inhibitor (5 uM) of this reaction. Glyoxylate inhibits the reductive amination of L-2-amino-6-oxopimelate about 30%. The enzyme is inhibited completely by p-chloromercuribenzoate and HgCl(2) in vitro. Functionally, catalyzes the reversible NADPH-dependent reductive amination of L-2-amino-6-oxopimelate, the acyclic form of L-tetrahydrodipicolinate, to generate the meso compound, D,L-2,6-diaminopimelate. Probably plays a role in lysine biosynthesis. Exhibits a high substrate specificity, since alpha-ketoglutarate, pyruvate, oxaloacetate, glyoxylate, alpha-ketobutyrate, alpha-ketovalerate, alpha-ketocaproate, alpha-ketoisocaproate, alpha-ketoisovalerate, and phenylpyruvate are not substrates for the reductive amination reaction, and L,L-2,6-diaminopimelate, D,D-2,6-diaminopimelate, DL-alpha-aminopimelate, meso- and DL-2,5-diaminoadipate, L-djenkolate, L-cystine, L-lysine, S-(beta-aminoethy1)-L-homocysteine, L-ornithine, L-arginine, L-alpha,gamma-diaminobutyrate, L-histidine, L-phenylalanine, L-tyrosine, L-glutamate, L-aspartate, L-leucine, L-valine, L-methionine, L-serine, L-alanine, L-alpha-aminobutyrate, D-lysine, D-glutamate, D-leucine, D-alanine, D-phenylalanine, epsilon-aminocaproate, 7-aminoheptanoate, and 8-aminooctanoate are not substrates for the oxidative deamination reaction. Cannot use NAD(+) or NAD(+) analogs instead of NADP(+) for the oxidative deamination reaction. The chain is Meso-diaminopimelate D-dehydrogenase (dapdh) from Lysinibacillus sphaericus (Bacillus sphaericus).